The primary structure comprises 226 residues: Imidazoleglycerol-phosphate dehydratase (226 aa).

The interval 23 to 55 (LTGGPIERPQPSLFASEKGANTAGPDDASQTTA) is disordered.

Belongs to the imidazoleglycerol-phosphate dehydratase family.

The catalysed reaction is D-erythro-1-(imidazol-4-yl)glycerol 3-phosphate = 3-(imidazol-4-yl)-2-oxopropyl phosphate + H2O. Its pathway is amino-acid biosynthesis; L-histidine biosynthesis; L-histidine from 5-phospho-alpha-D-ribose 1-diphosphate: step 6/9. The polypeptide is Imidazoleglycerol-phosphate dehydratase (HIS3) (Maudiozyma humilis (Sour dough yeast)).